Reading from the N-terminus, the 1300-residue chain is DNA-directed RNA polymerase subunit beta (1300 aa).

It belongs to the RNA polymerase beta chain family. The RNAP catalytic core consists of 2 alpha, 1 beta, 1 beta' and 1 omega subunit. When a sigma factor is associated with the core the holoenzyme is formed, which can initiate transcription.

It catalyses the reaction RNA(n) + a ribonucleoside 5'-triphosphate = RNA(n+1) + diphosphate. Its function is as follows. DNA-dependent RNA polymerase catalyzes the transcription of DNA into RNA using the four ribonucleoside triphosphates as substrates. The chain is DNA-directed RNA polymerase subunit beta from Chlorobium chlorochromatii (strain CaD3).